The primary structure comprises 255 residues: Membrane protein insertase YidC 2 (255 aa).

The first 20 residues, 1 to 20, serve as a signal peptide directing secretion; it reads MKKKLGLLAMVVALMAITAG. Cys-21 carries the N-palmitoyl cysteine lipid modification. The S-diacylglycerol cysteine moiety is linked to residue Cys-21. The next 5 membrane-spanning stretches (helical) occupy residues 59–79, 129–149, 160–180, 202–222, and 223–243; these read YGLA…PLMI, LAGC…YHAI, FLWF…VAAI, MMLW…PAAL, and SLYW…IKGP.

The protein belongs to the OXA1/ALB3/YidC family. Type 2 subfamily.

It localises to the cell membrane. Functionally, required for the insertion and/or proper folding and/or complex formation of integral membrane proteins into the membrane. Involved in integration of membrane proteins that insert both dependently and independently of the Sec translocase complex, as well as at least some lipoproteins. In Bacillus anthracis, this protein is Membrane protein insertase YidC 2.